A 121-amino-acid polypeptide reads, in one-letter code: Nitrogen fixation nifHD region GlnB-like protein 2 (121 aa).

This sequence belongs to the P(II) protein family.

In terms of biological role, could be involved in the regulation of nitrogen fixation. This chain is Nitrogen fixation nifHD region GlnB-like protein 2 (glnBB), found in Methanothermobacter marburgensis (strain ATCC BAA-927 / DSM 2133 / JCM 14651 / NBRC 100331 / OCM 82 / Marburg) (Methanobacterium thermoautotrophicum).